The sequence spans 514 residues: Peptide chain release factor 3 (514 aa).

Positions 8–268 constitute a tr-type G domain; that stretch reads KKRRTFAIIS…TFLEFAPEPH (261 aa). GTP contacts are provided by residues 17-24, 85-89, and 139-142; these read SHPDAGKT, DTPGH, and NKLD.

The protein belongs to the TRAFAC class translation factor GTPase superfamily. Classic translation factor GTPase family. PrfC subfamily.

It localises to the cytoplasm. Increases the formation of ribosomal termination complexes and stimulates activities of RF-1 and RF-2. It binds guanine nucleotides and has strong preference for UGA stop codons. It may interact directly with the ribosome. The stimulation of RF-1 and RF-2 is significantly reduced by GTP and GDP, but not by GMP. The chain is Peptide chain release factor 3 from Streptococcus pyogenes serotype M2 (strain MGAS10270).